Consider the following 508-residue polypeptide: Histidine--tRNA ligase, cytoplasmic (508 aa).

Positions 3 to 59 (SPALEELVLNSRHRLVRGLKQQKASADQIEEEVAKLLKLKAQLGHDESKQKFVLKTP) constitute a WHEP-TRS domain. The residue at position 66 (S66) is a Phosphoserine. Residues 130–132 (DLT), R157, D177, R326, and 330–331 (YY) contribute to the L-histidine site.

It belongs to the class-II aminoacyl-tRNA synthetase family. In terms of assembly, homodimer.

It is found in the cytoplasm. It catalyses the reaction tRNA(His) + L-histidine + ATP = L-histidyl-tRNA(His) + AMP + diphosphate + H(+). Catalyzes the ATP-dependent ligation of histidine to the 3'-end of its cognate tRNA, via the formation of an aminoacyl-adenylate intermediate (His-AMP). Plays a role in axon guidance. In Mesocricetus auratus (Golden hamster), this protein is Histidine--tRNA ligase, cytoplasmic (HARS1).